The sequence spans 329 residues: DNA-directed RNA polymerase subunit alpha (329 aa).

Positions 1–235 (MQGSVTEFLK…EQLDAFVDLR (235 aa)) are alpha N-terminal domain (alpha-NTD). An alpha C-terminal domain (alpha-CTD) region spans residues 249–329 (FDPILLRPVD…NWPPASIAED (81 aa)).

The protein belongs to the RNA polymerase alpha chain family. As to quaternary structure, homodimer. The RNAP catalytic core consists of 2 alpha, 1 beta, 1 beta' and 1 omega subunit. When a sigma factor is associated with the core the holoenzyme is formed, which can initiate transcription.

It catalyses the reaction RNA(n) + a ribonucleoside 5'-triphosphate = RNA(n+1) + diphosphate. In terms of biological role, DNA-dependent RNA polymerase catalyzes the transcription of DNA into RNA using the four ribonucleoside triphosphates as substrates. The protein is DNA-directed RNA polymerase subunit alpha of Aliivibrio salmonicida (strain LFI1238) (Vibrio salmonicida (strain LFI1238)).